Reading from the N-terminus, the 627-residue chain is DNA mismatch repair protein MutL (627 aa).

Residues D354 to E364 are compositionally biased toward basic and acidic residues. The segment at D354–M374 is disordered.

Belongs to the DNA mismatch repair MutL/HexB family.

This protein is involved in the repair of mismatches in DNA. It is required for dam-dependent methyl-directed DNA mismatch repair. May act as a 'molecular matchmaker', a protein that promotes the formation of a stable complex between two or more DNA-binding proteins in an ATP-dependent manner without itself being part of a final effector complex. Overexpression of mutSL partially suppresses the high spontaneous mutation frequency of a ytkD/mutM/mutY triple disruption which lacks the system required to prevent damage by oxidized guanine (8-oxo-dGTP). This suggests that MutSL also functions to repair mismatches due to oxidative stress in both growing and stationary phase cells. In Bacillus subtilis (strain 168), this protein is DNA mismatch repair protein MutL.